An 83-amino-acid polypeptide reads, in one-letter code: Small cysteine-rich protein 3 (83 aa).

Positions 1-21 (MGVKLNICLLLLLVAIISSQG) are cleaved as a signal peptide. The propeptide occupies 22-39 (FNLRKKEDSKDEKPFGNY). Residues 25–35 (RKKEDSKDEKP) show a composition bias toward basic and acidic residues. Positions 25-44 (RKKEDSKDEKPFGNYRRGSP) are disordered.

It belongs to the Cnidaria small cysteine-rich protein (SCRiP) family. alpha subfamily. In terms of processing, contains 4 disulfide bonds.

It is found in the secreted. Its subcellular location is the nematocyst. Functionally, this recombinant protein induces severe neurotoxicity on zebrafish larvae (Danio rerio) at a concentration of 230 mg/ml, but does not show toxicity when injected in blowfly larvae (Sarcophaga falculata). All fish incubated with this protein died within 16 hours of exposure. Has also been claimed to be implied in calcification, but this function seems improbable. This chain is Small cysteine-rich protein 3, found in Acropora millepora (Staghorn coral).